Consider the following 163-residue polypeptide: Leptin (163 aa).

The first 18 residues, 1-18, serve as a signal peptide directing secretion; that stretch reads MCWRPLCRLWSYLVYVQA. Cys113 and Cys163 are joined by a disulfide.

The protein belongs to the leptin family. In terms of tissue distribution, not exclusively localized in adipose tissue but is also expressed in liver.

Its subcellular location is the secreted. Its function is as follows. Key player in the regulation of energy balance and body weight control. Once released into the circulation, has central and peripheral effects by binding LEPR, found in many tissues, which results in the activation of several major signaling pathways. The chain is Leptin (LEP) from Gallus gallus (Chicken).